Reading from the N-terminus, the 80-residue chain is Phycocyanin-645 alpha-1 chain (80 aa).

Position 16 (Arg16) interacts with (2R,3E)-phycocyanobilin. Mesobiliverdin contacts are provided by Cys18, Gln24, Tyr25, and Lys40. Residues Pro71 and Ile73 each coordinate 15,16-dihydrobiliverdin.

This sequence belongs to the phycoerythrin family. As to quaternary structure, heterotetramer of 2 different alpha chains and 2 identical beta chains which form 2 alpha-beta heterodimers within the heterotetramer. Contains one phycocyanobilin chromophore, one mesobiliverdin chromophore and one 15,16-dihydrobiliverdin chromophore with binding mediated by both the alpha and beta subunits.

The protein localises to the plastid. Its subcellular location is the chloroplast thylakoid membrane. Functionally, light-harvesting photosynthetic tetrapyrrole chromophore-protein from the phycobiliprotein complex. The chain is Phycocyanin-645 alpha-1 chain from Chroomonas sp.